Here is a 489-residue protein sequence, read N- to C-terminus: MSDSSSSDGEDNQKFLGNRKKNLTKKKVVTEEIEKDDEEDVKEKSFAELGVSQPLCDACQRLGWMKPSKIQQAALPHALQGKDVIGLAETGSGKTGAFAIPVLQSLLDHPQAFFCLVLTPTRELAFQIGQQFEALGSGIGLIAAVIVGGVDMAAQAMALARRPHIIVATPGRLVDHLENTKGFNLKALKFLIMDEADRILNMDFEVELDKILKVIPRERRTYLFSATMTKKVSKLERASLRDPARVSVSSRYKTVDNLKQHYIFVPNKYKETYLVYLLNEHAGNSAIVFCATCATTMQIAVMLRQLGMQAVPLHGQMSQEKRLGSLNKFKSKAREILVCTDVAARGLDIPHVDMVINYDMPSQSKDYVHRVGRTARAGRSGIAITVVTQYDVEAYQKIEANLGKKLDEYKCVENEVMVLVERTQEATENARIEMKEMDEKKKSGKKRRQNDDFGDTEESGGRFKMGIKSMGGRGGSGGGRGGKKKKMSK.

The short motif at 44 to 72 (KSFAELGVSQPLCDACQRLGWMKPSKIQQ) is the Q motif element. Positions 75–246 (LPHALQGKDV…RASLRDPARV (172 aa)) constitute a Helicase ATP-binding domain. 88–95 (AETGSGKT) is a binding site for ATP. The DEAD box signature appears at 194–197 (DEAD). The Helicase C-terminal domain occupies 257-417 (NLKQHYIFVP…EYKCVENEVM (161 aa)). Residues 433 to 489 (EMKEMDEKKKSGKKRRQNDDFGDTEESGGRFKMGIKSMGGRGGSGGGRGGKKKKMSK) are disordered. The span at 469 to 480 (SMGGRGGSGGGR) shows a compositional bias: gly residues.

This sequence belongs to the DEAD box helicase family. DDX47/RRP3 subfamily.

It is found in the nucleus. It carries out the reaction ATP + H2O = ADP + phosphate + H(+). Probable ATP-dependent RNA helicase which may be involved in ribosome biogenesis. The polypeptide is Putative ATP-dependent RNA helicase T26G10.1 (Caenorhabditis elegans).